We begin with the raw amino-acid sequence, 207 residues long: Large ribosomal subunit protein uL4 (207 aa).

The segment at 43-85 is disordered; the sequence is SRRQGTHDTKGRSEVRGGGRKPWKQKGTGRARQGSIRSPQWVG. The span at 47–59 shows a compositional bias: basic and acidic residues; that stretch reads GTHDTKGRSEVRG. The segment covering 60-71 has biased composition (basic residues); the sequence is GGRKPWKQKGTG.

Belongs to the universal ribosomal protein uL4 family. In terms of assembly, part of the 50S ribosomal subunit.

One of the primary rRNA binding proteins, this protein initially binds near the 5'-end of the 23S rRNA. It is important during the early stages of 50S assembly. It makes multiple contacts with different domains of the 23S rRNA in the assembled 50S subunit and ribosome. In terms of biological role, forms part of the polypeptide exit tunnel. In Exiguobacterium sibiricum (strain DSM 17290 / CCUG 55495 / CIP 109462 / JCM 13490 / 255-15), this protein is Large ribosomal subunit protein uL4.